The chain runs to 201 residues: Segregation and condensation protein B (201 aa).

Belongs to the ScpB family. Homodimer. Homodimerization may be required to stabilize the binding of ScpA to the Smc head domains. Component of a cohesin-like complex composed of ScpA, ScpB and the Smc homodimer, in which ScpA and ScpB bind to the head domain of Smc. The presence of the three proteins is required for the association of the complex with DNA.

Its subcellular location is the cytoplasm. Participates in chromosomal partition during cell division. May act via the formation of a condensin-like complex containing Smc and ScpA that pull DNA away from mid-cell into both cell halves. This chain is Segregation and condensation protein B, found in Enterococcus faecalis (strain ATCC 700802 / V583).